The sequence spans 65 residues: Large ribosomal subunit protein bL35 (65 aa).

This sequence belongs to the bacterial ribosomal protein bL35 family.

The polypeptide is Large ribosomal subunit protein bL35 (Borrelia duttonii (strain Ly)).